The following is a 318-amino-acid chain: Beta-galactosidase small subunit (318 aa).

The protein belongs to the bacterial beta-galactosidase small subunit family. In terms of assembly, heterodimer of a large (LacL) and a small subunit (LacM).

The catalysed reaction is Hydrolysis of terminal non-reducing beta-D-galactose residues in beta-D-galactosides.. Functionally, component of a beta-galactosidase. This chain is Beta-galactosidase small subunit, found in Lactobacillus helveticus (Lactobacillus suntoryeus).